Consider the following 72-residue polypeptide: NAD(P)H-quinone oxidoreductase subunit O (72 aa).

The protein belongs to the complex I NdhO subunit family. NDH-1 can be composed of about 15 different subunits; different subcomplexes with different compositions have been identified which probably have different functions.

Its subcellular location is the cellular thylakoid membrane. It carries out the reaction a plastoquinone + NADH + (n+1) H(+)(in) = a plastoquinol + NAD(+) + n H(+)(out). The enzyme catalyses a plastoquinone + NADPH + (n+1) H(+)(in) = a plastoquinol + NADP(+) + n H(+)(out). NDH-1 shuttles electrons from an unknown electron donor, via FMN and iron-sulfur (Fe-S) centers, to quinones in the respiratory and/or the photosynthetic chain. The immediate electron acceptor for the enzyme in this species is believed to be plastoquinone. Couples the redox reaction to proton translocation, and thus conserves the redox energy in a proton gradient. Cyanobacterial NDH-1 also plays a role in inorganic carbon-concentration. In Trichodesmium erythraeum (strain IMS101), this protein is NAD(P)H-quinone oxidoreductase subunit O.